The chain runs to 250 residues: Small ribosomal subunit protein uS2 (250 aa).

Belongs to the universal ribosomal protein uS2 family.

The chain is Small ribosomal subunit protein uS2 from Acidovorax ebreus (strain TPSY) (Diaphorobacter sp. (strain TPSY)).